Reading from the N-terminus, the 288-residue chain is Elongation factor Ts (288 aa).

The tract at residues 82–85 (TDFV) is involved in Mg(2+) ion dislocation from EF-Tu.

Belongs to the EF-Ts family.

It is found in the cytoplasm. Associates with the EF-Tu.GDP complex and induces the exchange of GDP to GTP. It remains bound to the aminoacyl-tRNA.EF-Tu.GTP complex up to the GTP hydrolysis stage on the ribosome. This Chlorobaculum tepidum (strain ATCC 49652 / DSM 12025 / NBRC 103806 / TLS) (Chlorobium tepidum) protein is Elongation factor Ts.